The following is a 343-amino-acid chain: uncharacterized protein (343 aa).

Disordered stretches follow at residues 1 to 27 (MIRE…ERMT) and 205 to 247 (SGGL…SKRQ). Positions 16-27 (RARDSRAQERMT) are enriched in basic and acidic residues. Residues 219-228 (GQDDGNTDDG) show a composition bias toward acidic residues. The span at 229 to 247 (NDVHQKGRGEVESKTSKRQ) shows a compositional bias: basic and acidic residues.

In terms of biological role, dispensable for normal development and fertility. This is an uncharacterized protein from Bos taurus (Bovine).